A 348-amino-acid chain; its full sequence is MELAMVNLSEGNGSDPEPPAPESRPLFGIGVENFITLVVFGLIFAMGVLGNSLVITVLARSKPGKPRSTTNLFILNLSIADLAYLLFCIPFQATVYALPTWVLGAFICKFIHYFFTVSMLVSIFTLAAMSVDRYVAIVHSRRSSSLRVSRNALLGVGFIWALSIAMASPVAYHQRLFHRDSNQTFCWEQWPNKLHKKAYVVCTFVFGYLLPLLLICFCYAKVLNHLHKKLKNMSKKSEASKKKTAQTVLVVVVVFGISWLPHHVVHLWAEFGAFPLTPASFFFRITAHCLAYSNSSVNPIIYAFLSENFRKAYKQVFKCHVCDESPRSETKENKSRMDTPPSTNCTHV.

Topologically, residues 1–34 (MELAMVNLSEGNGSDPEPPAPESRPLFGIGVENF) are extracellular. N-linked (GlcNAc...) asparagine glycans are attached at residues Asn-7 and Asn-12. Residues 35 to 55 (ITLVVFGLIFAMGVLGNSLVI) traverse the membrane as a helical segment. The Cytoplasmic segment spans residues 56-70 (TVLARSKPGKPRSTT). A helical membrane pass occupies residues 71 to 91 (NLFILNLSIADLAYLLFCIPF). Topologically, residues 92–109 (QATVYALPTWVLGAFICK) are extracellular. Cysteines 108 and 186 form a disulfide. Residues 110 to 131 (FIHYFFTVSMLVSIFTLAAMSV) form a helical membrane-spanning segment. The Cytoplasmic portion of the chain corresponds to 132 to 151 (DRYVAIVHSRRSSSLRVSRN). A helical transmembrane segment spans residues 152–172 (ALLGVGFIWALSIAMASPVAY). The Extracellular segment spans residues 173 to 197 (HQRLFHRDSNQTFCWEQWPNKLHKK). N-linked (GlcNAc...) asparagine glycosylation is present at Asn-182. Residues 198–218 (AYVVCTFVFGYLLPLLLICFC) traverse the membrane as a helical segment. At 219–247 (YAKVLNHLHKKLKNMSKKSEASKKKTAQT) the chain is on the cytoplasmic side. Residues 248-268 (VLVVVVVFGISWLPHHVVHLW) form a helical membrane-spanning segment. Residues 269-270 (AE) lie on the Extracellular side of the membrane. Residues 271 to 291 (FGAFPLTPASFFFRITAHCLA) traverse the membrane as a helical segment. Topologically, residues 292–348 (YSNSSVNPIIYAFLSENFRKAYKQVFKCHVCDESPRSETKENKSRMDTPPSTNCTHV) are cytoplasmic. The S-palmitoyl cysteine moiety is linked to residue Cys-319. Over residues 328–337 (SETKENKSRM) the composition is skewed to basic and acidic residues. Positions 328-348 (SETKENKSRMDTPPSTNCTHV) are disordered.

Belongs to the G-protein coupled receptor 1 family. Interacts with GRP39 AND HTR1A. In terms of processing, three cysteine residues are found in the C-terminus, at least one of which may be palmitoylated. In terms of tissue distribution, expression is detected in brain, spinal cord, heart and skeletal muscle.

The protein localises to the cell membrane. Its function is as follows. Receptor for the hormone galanin. The activity of this receptor is mediated by G proteins that inhibit adenylate cyclase activity. The protein is Galanin receptor type 1 (Galr1) of Mus musculus (Mouse).